The sequence spans 438 residues: Phosphoribosylamine--glycine ligase (438 aa).

The ATP-grasp domain occupies 108-316 (RTFMERNEIP…LLEVAEGIVD (209 aa)). 135 to 194 (VDDFGRPVVVKPIGLTGGKGVKVVGYQLRDNEEAKSYAEELIRRDGRVLIEERTNGVEFT) provides a ligand contact to ATP. The Mg(2+) site is built by Gln274, Glu286, and Asn288. Gln274, Glu286, and Asn288 together coordinate Mn(2+).

It belongs to the GARS family. Requires Mg(2+) as cofactor. It depends on Mn(2+) as a cofactor.

It catalyses the reaction 5-phospho-beta-D-ribosylamine + glycine + ATP = N(1)-(5-phospho-beta-D-ribosyl)glycinamide + ADP + phosphate + H(+). Its pathway is purine metabolism; IMP biosynthesis via de novo pathway; N(1)-(5-phospho-D-ribosyl)glycinamide from 5-phospho-alpha-D-ribose 1-diphosphate: step 2/2. This Thermococcus gammatolerans (strain DSM 15229 / JCM 11827 / EJ3) protein is Phosphoribosylamine--glycine ligase.